Reading from the N-terminus, the 138-residue chain is Putative nickel-responsive regulator (138 aa).

4 residues coordinate Ni(2+): histidine 78, histidine 89, histidine 91, and cysteine 97.

Belongs to the transcriptional regulatory CopG/NikR family. Ni(2+) is required as a cofactor.

Its function is as follows. Transcriptional regulator. This Pyrococcus furiosus (strain ATCC 43587 / DSM 3638 / JCM 8422 / Vc1) protein is Putative nickel-responsive regulator.